The following is a 338-amino-acid chain: Nucleoid-associated protein PA14_59050 (338 aa).

Belongs to the YejK family.

It localises to the cytoplasm. Its subcellular location is the nucleoid. This chain is Nucleoid-associated protein PA14_59050, found in Pseudomonas aeruginosa (strain UCBPP-PA14).